The chain runs to 102 residues: Large ribosomal subunit protein uL23c (102 aa).

The protein belongs to the universal ribosomal protein uL23 family. Part of the 50S ribosomal subunit.

Its subcellular location is the plastid. The protein resides in the chloroplast. Functionally, binds to 23S rRNA. In Phaeodactylum tricornutum (strain CCAP 1055/1), this protein is Large ribosomal subunit protein uL23c (rpl23).